The following is a 184-amino-acid chain: Mediator of RNA polymerase II transcription subunit 30 (184 aa).

Residues 136 to 179 (SQLRFASEEKREILEVNKKLKQKNQQLKQIMDQLRNLIWDINSM) adopt a coiled-coil conformation.

Belongs to the Mediator complex subunit 30 family. Component of the Mediator complex.

It is found in the nucleus. In terms of biological role, component of the Mediator complex, a coactivator involved in the regulated transcription of nearly all RNA polymerase II-dependent genes. Mediator functions as a bridge to convey information from gene-specific regulatory proteins to the basal RNA polymerase II transcription machinery. Mediator is recruited to promoters by direct interactions with regulatory proteins and serves as a scaffold for the assembly of a functional preinitiation complex with RNA polymerase II and the general transcription factors. The protein is Mediator of RNA polymerase II transcription subunit 30 (med30) of Xenopus laevis (African clawed frog).